An 82-amino-acid polypeptide reads, in one-letter code: Small ribosomal subunit protein bS18 (82 aa).

A disordered region spans residues 1-25; the sequence is MKRNNMKRARMEQSRRPKKNPLKAE.

This sequence belongs to the bacterial ribosomal protein bS18 family. As to quaternary structure, part of the 30S ribosomal subunit. Forms a tight heterodimer with protein bS6.

Binds as a heterodimer with protein bS6 to the central domain of the 16S rRNA, where it helps stabilize the platform of the 30S subunit. This is Small ribosomal subunit protein bS18 from Corynebacterium urealyticum (strain ATCC 43042 / DSM 7109).